Reading from the N-terminus, the 142-residue chain is uncharacterized protein (142 aa).

Residues Asn-29 and Asn-67 are each glycosylated (N-linked (GlcNAc...) asparagine; by host). A helical membrane pass occupies residues 88 to 108; sequence VFYLGYPVIFIIGVTYFSIIA.

The protein resides in the membrane. This is an uncharacterized protein from Acanthamoeba polyphaga mimivirus (APMV).